The primary structure comprises 557 residues: Tight junction-associated protein 1 (557 aa).

The disordered stretch occupies residues 1-37 (MTSAAPAKKPYRKAPPEHRELRLEIPGSRLEQEEPLT). Thr-2 carries the N-acetylthreonine modification. Basic and acidic residues predominate over residues 14-23 (APPEHRELRL). The stretch at 42 to 171 (MKLLQEENEE…EELNERYRLD (130 aa)) forms a coiled coil. Disordered regions lie at residues 266-303 (MSEG…SPEE) and 309-328 (AFEK…LYPG). The span at 274 to 286 (PASPPAPGSPTPQ) shows a compositional bias: pro residues. The residue at position 300 (Ser-300) is a Phosphoserine. A compositionally biased stretch (pro residues) spans 316-325 (YPTPSPPHPL). Thr-318 is subject to Phosphothreonine. Ser-320 and Ser-345 each carry phosphoserine. The disordered stretch occupies residues 364-409 (EEGSERARPSPVPSTPASAQASPHHQPSPAPLTLSAPASSASSEED). Polar residues predominate over residues 378-388 (TPASAQASPHH). A compositionally biased stretch (low complexity) spans 394–405 (PLTLSAPASSAS). Thr-422 is subject to Phosphothreonine. The span at 439-456 (LPELQRHFAHSPADRDEV) shows a compositional bias: basic and acidic residues. Residues 439–557 (LPELQRHFAH…QAQEQGNLLN (119 aa)) form a disordered region. A Phosphoserine modification is found at Ser-491. Residues 530-542 (RSPKRMGVHHLHR) show a composition bias toward basic residues. Ser-545 carries the phosphoserine modification. A compositionally biased stretch (polar residues) spans 546 to 557 (LTQAQEQGNLLN).

Interacts with DLG1. Interacts with ARF6 (GTP-bound form). In terms of tissue distribution, ubiquitously expressed.

The protein resides in the golgi apparatus. It is found in the trans-Golgi network. The protein localises to the cell junction. It localises to the tight junction. Its subcellular location is the cell membrane. Its function is as follows. Plays a role in regulating the structure of the Golgi apparatus. In Homo sapiens (Human), this protein is Tight junction-associated protein 1.